A 447-amino-acid chain; its full sequence is MIKIKKGLNLPIAGRPEQVIYDGPAITEVALLGEEYAGMRPSMKVKEGDAVKKGQVLFEDKKNPGVVFTAPASGKIAAIHRGEKRVLQSVVIAVEGNDEIEFDRYAPDALAKLSGKEVRRNLIQSGLWTALRTRPFSKIPAVDAEPFAIFVNAMDTNPLAADPVVVIKEAAEDFRRGLLVLSRLTERKIHVCKAAGADVPSENAANIETHEFGGPHPAGLSGTHIHFIEPVGANKTVWTINYQDVIAIGRLFATGRLNTGRVVALGGSQVNKPRLLRTVLGAKVSQITAGELVDADNRVISGSVLNGAIAQGAHDYLGRYHNQISVIEEGRSKELLGWVAPQPDKYSITRTTLGHFLKNKLFKFNTAVNGGDRAMVPIGTYERVMPLDILPTLLLRDLIVGDTDSAQALGCLELDEEDLALCSFVCPGKYEYGPLLRKVLETIEKEG.

This sequence belongs to the NqrA family. Composed of six subunits; NqrA, NqrB, NqrC, NqrD, NqrE and NqrF.

It catalyses the reaction a ubiquinone + n Na(+)(in) + NADH + H(+) = a ubiquinol + n Na(+)(out) + NAD(+). Functionally, NQR complex catalyzes the reduction of ubiquinone-1 to ubiquinol by two successive reactions, coupled with the transport of Na(+) ions from the cytoplasm to the periplasm. NqrA to NqrE are probably involved in the second step, the conversion of ubisemiquinone to ubiquinol. This is Na(+)-translocating NADH-quinone reductase subunit A from Neisseria meningitidis serogroup C / serotype 2a (strain ATCC 700532 / DSM 15464 / FAM18).